A 549-amino-acid polypeptide reads, in one-letter code: Cation/acetate symporter ActP (549 aa).

The next 13 membrane-spanning stretches (helical) occupy residues 33 to 53, 77 to 97, 103 to 123, 148 to 168, 183 to 203, 206 to 226, 262 to 282, 303 to 323, 355 to 375, 404 to 424, 428 to 448, 464 to 484, and 493 to 513; these read WQAI…TYWA, LAIA…ALVF, GLIY…LIAE, ILSA…QMVG, IAVV…GMLA, WVQI…AFMV, ISAL…PHIL, GFMG…IMLV, LFLG…VAGL, VSKI…VLFE, IAFM…PIIL, GGWL…TIWV, and IFPY…GIWF.

This sequence belongs to the sodium:solute symporter (SSF) (TC 2.A.21) family.

Its subcellular location is the cell inner membrane. Transports acetate. In Escherichia coli (strain ATCC 8739 / DSM 1576 / NBRC 3972 / NCIMB 8545 / WDCM 00012 / Crooks), this protein is Cation/acetate symporter ActP.